The following is a 341-amino-acid chain: Probable GDP-mannose transporter 2 (341 aa).

Over 1–11 (MSKHKHEWTES) the chain is Cytoplasmic. The helical transmembrane segment at 12-32 (VANSGPASILSYCASSILMTV) threads the bilayer. The Lumenal portion of the chain corresponds to 33-46 (TNKFVVNLDNFNMN). A helical transmembrane segment spans residues 47-67 (FVMLFVQSLVCTVTLCILRIV). Topologically, residues 68-85 (GVANFRSLNRTDVKNWFP) are cytoplasmic. Residues 86-106 (ISLLLVLMIYTSLKSLQYLAV) traverse the membrane as a helical segment. Position 107 (Pro107) is a topological domain, lumenal. A helical transmembrane segment spans residues 108–128 (IYTIFKNLTIILIAYGEVLFF). The Cytoplasmic portion of the chain corresponds to 129–139 (GGKVTSMELTS). Residues 140–160 (FIMMVLSSVVATWGDQQAIAI) form a helical membrane-spanning segment. Residues 161–176 (KASSLEDLDQELVEST) lie on the Lumenal side of the membrane. A helical membrane pass occupies residues 177-197 (IFVLNPGYLWMFTNCISSALF). At 198–214 (VLIMRKRIRLTNFKDYD) the chain is on the cytoplasmic side. Residues 215–235 (TMFYNNVLALPLLLVFSFIME) form a helical membrane-spanning segment. Topologically, residues 236 to 251 (DWSTKNLSVNLSADSL) are lumenal. Residues Asn241 and Asn245 are each glycosylated (N-linked (GlcNAc...) asparagine). Residues 252–272 (AAMVISGLMSVGISYCSGWCV) traverse the membrane as a helical segment. Residues 273–278 (RVTSST) lie on the Cytoplasmic side of the membrane. Residues 279-299 (TYSMVGALNKLPIALAGLVFF) traverse the membrane as a helical segment. Residues 300–303 (DAPK) lie on the Lumenal side of the membrane. A helical membrane pass occupies residues 304–324 (NFLSFFSIFLGFLSGLLYAVA). The Cytoplasmic segment spans residues 325–341 (KQKKIQQQKVLAATLEK).

This sequence belongs to the TPT transporter family. SLC35D subfamily.

The protein localises to the golgi apparatus membrane. The protein resides in the cytoplasmic vesicle membrane. It localises to the endoplasmic reticulum membrane. Functionally, involved in the import of GDP-mannose from the cytoplasm into the Golgi lumen. The sequence is that of Probable GDP-mannose transporter 2 (HVG1) from Saccharomyces cerevisiae (strain Lalvin EC1118 / Prise de mousse) (Baker's yeast).